A 470-amino-acid polypeptide reads, in one-letter code: Poly(A) polymerase catalytic subunit (470 aa).

Residues Asp192 and Asp194 contribute to the active site.

This sequence belongs to the poxviridae poly(A) polymerase catalytic subunit family. In terms of assembly, heterodimer of a large (catalytic) subunit and a small (regulatory) subunit.

The enzyme catalyses RNA(n) + ATP = RNA(n)-3'-adenine ribonucleotide + diphosphate. Its function is as follows. Polymerase that creates the 3'-poly(A) tail of mRNA's. This Odocoileus hemionus (Mule deer) protein is Poly(A) polymerase catalytic subunit (PAPL).